We begin with the raw amino-acid sequence, 811 residues long: N-terminal acetyltransferase B complex subunit arm1 (811 aa).

This sequence belongs to the MDM20/NAA25 family. As to quaternary structure, component of the N-terminal acetyltransferase B (NatB) complex.

Its subcellular location is the cytoplasm. Its function is as follows. Non-catalytic subunit of the NatB N-terminal acetyltransferase, which catalyzes acetylation of the amino-terminal methionine residues of all proteins beginning with Met-Asp or Met-Glu and of some proteins beginning with Met-Asn or Met-Met. The polypeptide is N-terminal acetyltransferase B complex subunit arm1 (arm1) (Schizosaccharomyces pombe (strain 972 / ATCC 24843) (Fission yeast)).